The primary structure comprises 138 residues: Sporulation-specific protein 13 (138 aa).

The span at Met-1–Phe-11 shows a compositional bias: polar residues. Residues Met-1–Lys-31 are disordered. Residues Ser-12–Asn-23 are compositionally biased toward low complexity. Residues Asn-16–Lys-104 adopt a coiled-coil conformation.

In terms of assembly, interacts with spo2.

It localises to the cytoplasm. The protein localises to the cytoskeleton. The protein resides in the microtubule organizing center. Its subcellular location is the spindle pole body. Involved in sporulation. Plays a significant role in modification of the spindle pole body prior to spore formation and is required for initiating forespore membrane formation. The polypeptide is Sporulation-specific protein 13 (spo13) (Schizosaccharomyces pombe (strain 972 / ATCC 24843) (Fission yeast)).